The primary structure comprises 358 residues: Tripartite motif-containing protein 54 (358 aa).

An RING-type zinc finger spans residues 26–82 (CPICLEMFSKPVVILPCQHNLCRKCANDVFQASNPLWQSRGSTTVSSGGRFRCPSCR). The B box-type zinc finger occupies 121-163 (EQHLMCEEHEEEKINIYCLSCEVPTCSLCKVFGAHKDCEVAPL). Zn(2+) contacts are provided by Cys126, His129, Cys149, and His155. The mediates microtubule-binding and homooligomerization stretch occupies residues 168 to 211 (KRQKSELSDGIAMLVAGNDRVQAVITQMEEVCQTIEDNSRRQKQ). Residues 194–258 (QMEEVCQTIE…LIRQYGDHLE (65 aa)) are a coiled coil. Residues 271-329 (MEEPQMALYLQQAKELINKVGAMSKVELAGRPEPGYESMEQFTVSVEHVAEMLRTIDFQ) enclose the COS domain. A disordered region spans residues 326–358 (IDFQPGASGEEEEVAPDGDEGSAGQEEERPDGP). The segment covering 334-345 (GEEEEVAPDGDE) has biased composition (acidic residues).

As to quaternary structure, homooligomer and heterooligomer. Interacts with TRIM63 and probably with TRIM55. Interacts with tubulin.

It localises to the cytoplasm. Its subcellular location is the cytoskeleton. The protein localises to the myofibril. The protein resides in the sarcomere. It is found in the z line. Its function is as follows. May bind and stabilize microtubules during myotubes formation. The protein is Tripartite motif-containing protein 54 (TRIM54) of Pongo abelii (Sumatran orangutan).